A 64-amino-acid chain; its full sequence is MAVPKHRKSKAKKRSRQAANDKRFLGSLSICPQCGAERMPHRICPECGFYKDRVIKAPKTQNAG.

The span at 1–16 (MAVPKHRKSKAKKRSR) shows a compositional bias: basic residues. Residues 1–22 (MAVPKHRKSKAKKRSRQAANDK) are disordered.

It belongs to the bacterial ribosomal protein bL32 family.

This chain is Large ribosomal subunit protein bL32, found in Brachyspira hyodysenteriae (strain ATCC 49526 / WA1).